A 72-amino-acid chain; its full sequence is Penaeidin-2d (72 aa).

The signal sequence occupies residues 1-21 (MRLVVCLVFLASFALVCQGGA). Glutamine 22 carries the pyrrolidone carboxylic acid modification. 3 disulfide bridges follow: cysteine 45-cysteine 59, cysteine 48-cysteine 66, and cysteine 60-cysteine 67. Residue lysine 71 is modified to Lysine amide.

The protein belongs to the penaeidin family.

The protein localises to the cytoplasmic granule. Antibacterial and antifungal activity. Presents chitin-binding activity. This Penaeus setiferus (Atlantic white shrimp) protein is Penaeidin-2d.